The primary structure comprises 339 residues: Uroporphyrinogen decarboxylase (339 aa).

Substrate contacts are provided by residues 23 to 27 (RQAGR), aspartate 72, tyrosine 147, threonine 202, and histidine 315.

It belongs to the uroporphyrinogen decarboxylase family. As to quaternary structure, homodimer.

The protein resides in the cytoplasm. The enzyme catalyses uroporphyrinogen III + 4 H(+) = coproporphyrinogen III + 4 CO2. The protein operates within porphyrin-containing compound metabolism; protoporphyrin-IX biosynthesis; coproporphyrinogen-III from 5-aminolevulinate: step 4/4. In terms of biological role, catalyzes the decarboxylation of four acetate groups of uroporphyrinogen-III to yield coproporphyrinogen-III. The chain is Uroporphyrinogen decarboxylase from Geotalea uraniireducens (strain Rf4) (Geobacter uraniireducens).